A 748-amino-acid polypeptide reads, in one-letter code: Signal transducer and activator of transcription 4 (748 aa).

The SH2 domain occupies 569-664; that stretch reads WIDGYVMGFV…ENPLKYLYPD (96 aa). N6-acetyllysine is present on K667. At Y693 the chain carries Phosphotyrosine; by JAK. At S721 the chain carries Phosphoserine; by MAP2K6.

The protein belongs to the transcription factor STAT family. Forms a homodimer or a heterodimer with a related family member. Interacts with ARL2BP. The SH2 domain interacts, in vitro, with IL12RB2 via a short cytoplasmic domain. Interacts with STAT1. Interacts with JUN; this complex efficiently interacts with the AP-1-related sequence of the IFN-gamma. In terms of processing, acetylation at Lys-667 is required for JAK2-mediated phosphorylation and activation of STAT4. Tyrosine phosphorylated upon IL12 and IFN-alpha activation, but not by IFN-gamma in T-lymphocytes and NK cells. Serine phosphorylation is required for maximal transcriptional activity but not for DNA binding. Phosphorylation by MAP2K6 at Ser-721 is required for full transcriptional activity induced by IL12. However this serine phosphorylation is not required for cell proliferation although critical for IFN-gamma production.

The protein resides in the cytoplasm. Its subcellular location is the nucleus. Functionally, transcriptional regulator mainly expressed in hematopoietic cells that plays a critical role in cellular growth, differentiation and immune response. Plays a key role in the differentiation of T-helper 1 cells and the production of interferon-gamma. Also participates in multiple neutrophil functions including chemotaxis and production of the neutrophil extracellular traps. After IL12 binding to its receptor IL12RB2, STAT4 interacts with the intracellular domain of IL12RB2 and becomes tyrosine phosphorylated. Phosphorylated STAT4 then homodimerizes and migrates to the nucleus where it can recognize STAT target sequences present in IL12 responsive genes. Although IL12 appears to be the predominant activating signal, STAT4 can also be phosphorylated and activated in response to IFN-gamma stimulation via JAK1 and TYK2 and in response to different interleukins including IL23, IL2 and IL35. Transcription activation of IFN-gamma gene is mediated by interaction with JUN that forms a complex that efficiently interacts with the AP-1-related sequence of the IFN-gamma promoter. In response to IFN-alpha/beta signaling, acts as a transcriptional repressor and suppresses IL5 and IL13 mRNA expression during response to T-cell receptor (TCR) activation. The polypeptide is Signal transducer and activator of transcription 4 (STAT4) (Homo sapiens (Human)).